A 1534-amino-acid polypeptide reads, in one-letter code: DNA polymerase alpha catalytic subunit (1534 aa).

Low complexity predominate over residues 1–12 (MDEGSADAGASG). Disordered regions lie at residues 1–23 (MDEG…SEAV), 96–141 (THRT…LSAA), and 864–905 (FNST…GPSY). Residues 116 to 125 (RKRKQPRPQS) show a composition bias toward basic residues. Positions 127–141 (RPPQQSAAAASLSAA) are enriched in low complexity. 2 stretches are compositionally biased toward basic and acidic residues: residues 864–882 (FNST…RPDE) and 889–898 (DEGHHVDQGK). Zn(2+) contacts are provided by C1340, C1343, C1383, C1386, C1422, C1427, C1448, and C1454. The segment at 1340–1386 (CPSCSTTFDCPPVSSLIIGSSSGNVSNPNEGNDASINFWRRMRCPRC) adopts a CysA-type zinc-finger fold. A CysB motif motif is present at residues 1422–1451 (CDDEGCKYSTHSVNLRVMGDSERGTICPNY).

Belongs to the DNA polymerase type-B family.

The protein resides in the nucleus. It carries out the reaction DNA(n) + a 2'-deoxyribonucleoside 5'-triphosphate = DNA(n+1) + diphosphate. Its function is as follows. Polymerase alpha in a complex with DNA primase is a replicative polymerase. The protein is DNA polymerase alpha catalytic subunit of Oryza sativa subsp. japonica (Rice).